The sequence spans 128 residues: MAYRKLGRTSSQRKAMLRDLTTDLLINESIVTTEARAKEIRKTVEKMITLGKRGDLHARRQAAAYVRNEIASENYDEATDKYTSTTALQKLFSEIAPRYAERNGGYTRILKTEPRRGDAAPMAIIELV.

It belongs to the bacterial ribosomal protein bL17 family. In terms of assembly, part of the 50S ribosomal subunit. Contacts protein L32.

This Streptococcus equi subsp. equi (strain 4047) protein is Large ribosomal subunit protein bL17.